Consider the following 433-residue polypeptide: GTPase Der (433 aa).

EngA-type G domains follow at residues 3–167 (KIVS…DKNI) and 175–349 (PRIA…FNLR). GTP contacts are provided by residues 9–16 (GRPNVGKS), 56–60 (DTGGY), 119–122 (NKID), 181–188 (GRPNVGKS), 228–232 (DTAGI), and 293–296 (NKWD). A KH-like domain is found at 350-433 (LRIKTSLLNK…IPIKILFRLK (84 aa)).

This sequence belongs to the TRAFAC class TrmE-Era-EngA-EngB-Septin-like GTPase superfamily. EngA (Der) GTPase family. In terms of assembly, associates with the 50S ribosomal subunit.

In terms of biological role, GTPase that plays an essential role in the late steps of ribosome biogenesis. In Karelsulcia muelleri (strain GWSS) (Sulcia muelleri), this protein is GTPase Der.